Here is a 453-residue protein sequence, read N- to C-terminus: Putative ABC transporter ATP-binding protein MM_0462 (453 aa).

The region spanning 4-239 (LETRSLKYSY…QELLKKVGLR (236 aa)) is the ABC transporter domain. ATP is bound at residue 37–44 (GQNGSGKS).

The protein belongs to the ABC transporter superfamily.

The protein localises to the cell membrane. Functionally, probably part of an ABC transporter complex. Responsible for energy coupling to the transport system. This Methanosarcina mazei (strain ATCC BAA-159 / DSM 3647 / Goe1 / Go1 / JCM 11833 / OCM 88) (Methanosarcina frisia) protein is Putative ABC transporter ATP-binding protein MM_0462.